The chain runs to 338 residues: MHVYYDKDCDLSIIQSKKVAIIGYGSQGHAHACNLKDSGVDVVVGLRPGSATVKKAEAHGLKVTDVKSAVASADLVMILTPDEFQSKLYKEEIEPNIKKGAALAFAHGFAIHYNQVVPRADLDVIMIAPKAPGHTVRSEFVKGGGIPDLIAIYQDASGKAKDLALSYASGVGGGRTGIIETTFKDETETDLFGEQAVLCGGCVELVKAGFETLVDAGYAPEMAYFECLHELKLIVDLMYEGGIANMNYSISNNAEYGEYVTGPRVINDESRKAMRQALKDIQDGEYAKKFVLEGQTNYASMTAYRRNNAAHQIEVVGAKLRAMMPWIQANKIVDKAKN.

Positions 1–181 (MHVYYDKDCD…GGGRTGIIET (181 aa)) constitute a KARI N-terminal Rossmann domain. Residues 24–27 (YGSQ), arginine 47, serine 50, threonine 52, and 82–85 (DEFQ) contribute to the NADP(+) site. Histidine 107 is a catalytic residue. Residue glycine 133 participates in NADP(+) binding. A KARI C-terminal knotted domain is found at 182-327 (TFKDETETDL…AKLRAMMPWI (146 aa)). 4 residues coordinate Mg(2+): aspartate 190, glutamate 194, glutamate 226, and glutamate 230. Serine 251 lines the substrate pocket.

Belongs to the ketol-acid reductoisomerase family. Requires Mg(2+) as cofactor.

It carries out the reaction (2R)-2,3-dihydroxy-3-methylbutanoate + NADP(+) = (2S)-2-acetolactate + NADPH + H(+). The enzyme catalyses (2R,3R)-2,3-dihydroxy-3-methylpentanoate + NADP(+) = (S)-2-ethyl-2-hydroxy-3-oxobutanoate + NADPH + H(+). Its pathway is amino-acid biosynthesis; L-isoleucine biosynthesis; L-isoleucine from 2-oxobutanoate: step 2/4. It functions in the pathway amino-acid biosynthesis; L-valine biosynthesis; L-valine from pyruvate: step 2/4. Functionally, involved in the biosynthesis of branched-chain amino acids (BCAA). Catalyzes an alkyl-migration followed by a ketol-acid reduction of (S)-2-acetolactate (S2AL) to yield (R)-2,3-dihydroxy-isovalerate. In the isomerase reaction, S2AL is rearranged via a Mg-dependent methyl migration to produce 3-hydroxy-3-methyl-2-ketobutyrate (HMKB). In the reductase reaction, this 2-ketoacid undergoes a metal-dependent reduction by NADPH to yield (R)-2,3-dihydroxy-isovalerate. In Cellvibrio japonicus (strain Ueda107) (Pseudomonas fluorescens subsp. cellulosa), this protein is Ketol-acid reductoisomerase (NADP(+)).